The primary structure comprises 295 residues: Fructose-bisphosphate aldolase class 1 (295 aa).

Glutamate 176 (proton acceptor) is an active-site residue. Lysine 213 (schiff-base intermediate with dihydroxyacetone-P) is an active-site residue.

It belongs to the class I fructose-bisphosphate aldolase family.

The catalysed reaction is beta-D-fructose 1,6-bisphosphate = D-glyceraldehyde 3-phosphate + dihydroxyacetone phosphate. The protein operates within carbohydrate degradation; glycolysis; D-glyceraldehyde 3-phosphate and glycerone phosphate from D-glucose: step 4/4. This Clostridium acetobutylicum (strain ATCC 824 / DSM 792 / JCM 1419 / IAM 19013 / LMG 5710 / NBRC 13948 / NRRL B-527 / VKM B-1787 / 2291 / W) protein is Fructose-bisphosphate aldolase class 1.